Reading from the N-terminus, the 337-residue chain is Phenylalanine--tRNA ligase alpha subunit (337 aa).

E252 is a Mg(2+) binding site.

The protein belongs to the class-II aminoacyl-tRNA synthetase family. Phe-tRNA synthetase alpha subunit type 1 subfamily. As to quaternary structure, tetramer of two alpha and two beta subunits. It depends on Mg(2+) as a cofactor.

It localises to the cytoplasm. It carries out the reaction tRNA(Phe) + L-phenylalanine + ATP = L-phenylalanyl-tRNA(Phe) + AMP + diphosphate + H(+). This is Phenylalanine--tRNA ligase alpha subunit from Francisella tularensis subsp. mediasiatica (strain FSC147).